The primary structure comprises 492 residues: Serine incorporator 4 (492 aa).

The next 10 membrane-spanning stretches (helical) occupy residues 59–79 (YILL…KTVV), 113–133 (AVYR…VLLV), 148–168 (SFWS…FCIP), 179–199 (IGIC…TAFA), 219–239 (GVSL…VLLF), 254–274 (LLSL…APCI), 281–301 (SGLL…FSAL), 330–350 (IPDT…VLFA), 421–441 (GFHF…TNWF), and 464–484 (VASC…PLLA).

This sequence belongs to the TDE1 family.

It is found in the membrane. Incorporates a polar amino acid serine into membranes and facilitates the synthesis of two serine-derived lipids, phosphatidylserine and sphingolipids. The chain is Serine incorporator 4 (Serinc4) from Mus musculus (Mouse).